An 85-amino-acid chain; its full sequence is V-type proton ATPase subunit f (85 aa).

The next 2 membrane-spanning stretches (helical) occupy residues 13 to 33 (CTGLSLIGIVFLLVLSYLFSI) and 56 to 76 (CLGAVVIYAVFFLFCGSQVIV).

In terms of assembly, V-ATPase is a heteromultimeric enzyme composed of a peripheral catalytic V1 complex (components A to H) attached to an integral membrane V0 proton pore complex (components: a, c, c', c'', d, e, f and VOA1).

The protein resides in the endoplasmic reticulum membrane. Its function is as follows. Accessory component of the V0 complex of vacuolar(H+)-ATPase (V-ATPase), a multisubunit enzyme composed of a peripheral complex (V1) that hydrolyzes ATP and a membrane integral complex (V0) that translocates protons. V-ATPase is responsible for acidifying and maintaining the pH of intracellular compartments. In Schizosaccharomyces pombe (strain 972 / ATCC 24843) (Fission yeast), this protein is V-type proton ATPase subunit f.